The sequence spans 488 residues: E3 ubiquitin-protein ligase TRIM39 (488 aa).

An RING-type zinc finger spans residues 29-70; the sequence is CSVCLEYLKEPVIIECGHNFCKACITRWWEDLERDFPCPVCR. The B box-type zinc-finger motif lies at 102-143; the sequence is RDESLCSQHHEPLSLFCYEDQEAVCLICAISHTHRPHTVVPM. The Zn(2+) site is built by Cys-107, His-110, Cys-129, and His-135. Positions 181–250 form a coiled coil; the sequence is ELKRLVESRR…AHLAAEVEGK (70 aa). Interaction with CDKN1A regions lie at residues 268 to 307 and 359 to 488; these read KCEK…QLIA and TSGR…TDWE. One can recognise a B30.2/SPRY domain in the interval 289 to 484; it reads SNFPRQYFAL…NAAPLTIRPP (196 aa).

This sequence belongs to the TRIM/RBCC family. In terms of assembly, interacts with MOAP1. Interacts with CDKN1A. In terms of processing, autoubiquitinated.

The protein localises to the cytoplasm. It is found in the cytosol. The protein resides in the mitochondrion. Its subcellular location is the nucleus. The catalysed reaction is S-ubiquitinyl-[E2 ubiquitin-conjugating enzyme]-L-cysteine + [acceptor protein]-L-lysine = [E2 ubiquitin-conjugating enzyme]-L-cysteine + N(6)-ubiquitinyl-[acceptor protein]-L-lysine.. The protein operates within protein modification; protein ubiquitination. Its function is as follows. E3 ubiquitin-protein ligase. May facilitate apoptosis by inhibiting APC/C-Cdh1-mediated poly-ubiquitination and subsequent proteasome-mediated degradation of the pro-apoptotic protein MOAP1. Regulates the G1/S transition of the cell cycle and DNA damage-induced G2 arrest by stabilizing CDKN1A/p21. Positively regulates CDKN1A/p21 stability by competing with DTL for CDKN1A/p21 binding, therefore disrupting DCX(DTL) E3 ubiquitin ligase complex-mediated CDKN1A/p21 ubiquitination and degradation. The sequence is that of E3 ubiquitin-protein ligase TRIM39 (Trim39) from Mus musculus (Mouse).